Consider the following 31-residue polypeptide: Relaxin B chain (31 aa).

Q1 carries the post-translational modification Pyrrolidone carboxylic acid.

The protein belongs to the insulin family. In terms of assembly, heterodimer of a B chain and an A chain linked by two disulfide bonds.

It is found in the secreted. Relaxin is an ovarian hormone that acts with estrogen to produce dilatation of the birth canal in many mammals. The polypeptide is Relaxin B chain (Phocoenoides dalli dalli (Dall's porpoise)).